The chain runs to 692 residues: Alpha-amylase SusG (692 aa).

Positions 1-22 (MNKHLHFLSLLWLSMLMAFMTA) are cleaved as a signal peptide. Cys-23 carries N-palmitoyl cysteine lipidation. Cys-23 is lipidated: S-diacylglycerol cysteine. Mg(2+) is bound by residues Asp-73, Asp-75, Asp-77, Tyr-79, and Asp-81. A Ca(2+)-binding site is contributed by Asn-153. Starch binding stretches follow at residues His-154, 260-263 (YYGE), and 330-333 (NIMF). Asp-352 lines the Ca(2+) pocket. Positions 386-392 (RLDAVKH) are starch binding. Residue Asp-388 is the Nucleophile of the active site. His-392 is a binding site for Ca(2+). Glu-431 serves as the catalytic Proton donor. Regions of interest (starch binding) are located at Asp-437 and Arg-457.

This sequence belongs to the glycosyl hydrolase 13 family. In terms of assembly, monomer. Ca(2+) serves as cofactor.

The protein localises to the cell outer membrane. It carries out the reaction Endohydrolysis of (1-&gt;4)-alpha-D-glucosidic linkages in polysaccharides containing three or more (1-&gt;4)-alpha-linked D-glucose units.. Its pathway is glycan degradation; starch degradation. Its function is as follows. Alpha-amylase that cleaves starch into oligosaccharides before internalization for degradation, the first step in starch degradation. The polypeptide is Alpha-amylase SusG (susG) (Bacteroides thetaiotaomicron (strain ATCC 29148 / DSM 2079 / JCM 5827 / CCUG 10774 / NCTC 10582 / VPI-5482 / E50)).